Reading from the N-terminus, the 686-residue chain is DNA ligase (686 aa).

Residues 45-49, 94-95, and Glu127 contribute to the NAD(+) site; these read DNEYD and SL. Lys129 functions as the N6-AMP-lysine intermediate in the catalytic mechanism. NAD(+) is bound by residues Arg150, Glu187, Lys302, and Lys326. 4 residues coordinate Zn(2+): Cys420, Cys423, Cys438, and Cys444. In terms of domain architecture, BRCT spans 605-686; it reads LDNLPLEGQT…DEFLKMIGAS (82 aa).

The protein belongs to the NAD-dependent DNA ligase family. LigA subfamily. Requires Mg(2+) as cofactor. Mn(2+) is required as a cofactor.

It carries out the reaction NAD(+) + (deoxyribonucleotide)n-3'-hydroxyl + 5'-phospho-(deoxyribonucleotide)m = (deoxyribonucleotide)n+m + AMP + beta-nicotinamide D-nucleotide.. In terms of biological role, DNA ligase that catalyzes the formation of phosphodiester linkages between 5'-phosphoryl and 3'-hydroxyl groups in double-stranded DNA using NAD as a coenzyme and as the energy source for the reaction. It is essential for DNA replication and repair of damaged DNA. This chain is DNA ligase, found in Psychrobacter sp. (strain PRwf-1).